The following is a 97-amino-acid chain: Stefin-1 (97 aa).

The Secondary area of contact signature appears at 46–50 (QVVAG).

This sequence belongs to the cystatin family.

Its subcellular location is the cytoplasm. Functionally, this is an intracellular thiol proteinase inhibitor. The sequence is that of Stefin-1 (Stfa1) from Mus musculus (Mouse).